A 160-amino-acid chain; its full sequence is Large ribosomal subunit protein bL19 (160 aa).

2 stretches are compositionally biased toward basic and acidic residues: residues 1–15 (MTED…KEES) and 28–39 (ATRETKPKDSPS). The interval 1–44 (MTEDLKNTSPSKEESNEIEESSKATPKATRETKPKDSPSKTKLS) is disordered.

It belongs to the bacterial ribosomal protein bL19 family.

Its function is as follows. This protein is located at the 30S-50S ribosomal subunit interface and may play a role in the structure and function of the aminoacyl-tRNA binding site. This Prochlorococcus marinus (strain SARG / CCMP1375 / SS120) protein is Large ribosomal subunit protein bL19.